We begin with the raw amino-acid sequence, 371 residues long: Poly(rC)-binding protein 3 (371 aa).

3 consecutive KH domains span residues T45–G95, P129–G182, and A293–I357.

The protein localises to the cytoplasm. Functionally, single-stranded nucleic acid binding protein that binds preferentially to oligo dC. The protein is Poly(rC)-binding protein 3 of Homo sapiens (Human).